A 196-amino-acid polypeptide reads, in one-letter code: Peptidoglycan recognition protein (196 aa).

The first 23 residues, Met1 to Ala23, serve as a signal peptide directing secretion. Intrachain disulfides connect Cys25-Cys147 and Cys61-Cys67. Positions Arg46–Gly173 constitute an N-acetylmuramoyl-L-alanine amidase domain.

The protein belongs to the N-acetylmuramoyl-L-alanine amidase 2 family. In terms of assembly, monomer. As to expression, constitutively expressed in fat body, epithelial cells and hemocytes. Not detected in Malpighian tubules, silk gland or midgut.

In terms of biological role, binds specifically to peptidoglycan and triggers the propenoloxidase cascade which is an important insect defense mechanism. The sequence is that of Peptidoglycan recognition protein from Bombyx mori (Silk moth).